The following is a 583-amino-acid chain: cAMP-dependent protein kinase catalytic subunit 3 (583 aa).

2 disordered regions span residues alanine 51 to lysine 75 and serine 98 to lysine 264. 2 stretches are compositionally biased toward polar residues: residues threonine 52–proline 69 and serine 98–leucine 107. Positions threonine 108–serine 162 are enriched in low complexity. Residues aspartate 163–glutamine 176 show a composition bias toward acidic residues. Residues proline 181–serine 200 show a composition bias toward low complexity. Positions asparagine 205–glycine 219 are enriched in acidic residues. Positions glycine 221 to serine 234 are enriched in basic and acidic residues. The segment covering glutamate 235–glutamate 256 has biased composition (acidic residues). Residues tyrosine 274–phenylalanine 528 form the Protein kinase domain. ATP contacts are provided by residues valine 280 to valine 288 and lysine 303. Aspartate 397 functions as the Proton acceptor in the catalytic mechanism. The 55-residue stretch at lysine 529 to phenylalanine 583 folds into the AGC-kinase C-terminal domain.

Belongs to the protein kinase superfamily. AGC Ser/Thr protein kinase family. cAMP subfamily. Expressed in embryonic mesoderm, and the optic lamina, wing disk and leg disks of third instar larvae. More abundant in adult head than adult body.

It carries out the reaction L-seryl-[protein] + ATP = O-phospho-L-seryl-[protein] + ADP + H(+). It catalyses the reaction L-threonyl-[protein] + ATP = O-phospho-L-threonyl-[protein] + ADP + H(+). Functionally, does not have an essential role in development. The polypeptide is cAMP-dependent protein kinase catalytic subunit 3 (Pka-C3) (Drosophila melanogaster (Fruit fly)).